Consider the following 289-residue polypeptide: Delta-sarcoglycan (289 aa).

Residues 1-37 (MPQEQYSHHRSTMPSSEGPHIYKVGIYGWRKRCLYFF) are Cytoplasmic-facing. A helical; Signal-anchor for type II membrane protein membrane pass occupies residues 38-56 (VLLLMILILVNLAMTIWIL). The Extracellular portion of the chain corresponds to 57 to 289 (KVMNFTIDGM…TCQINTSVCL (233 aa)). Residues Asn60 and Asn108 are each glycosylated (N-linked (GlcNAc...) asparagine). 2 disulfides stabilise this stretch: Cys263-Cys288 and Cys265-Cys281. Asn284 carries an N-linked (GlcNAc...) asparagine glycan.

This sequence belongs to the sarcoglycan beta/delta/gamma/zeta family. In terms of assembly, interacts with FLNC. Cross-link to form 2 major subcomplexes: one consisting of SGCB, SGCD and SGCG and the other consisting of SGCB and SGCD. The association between SGCB and SGCG is particularly strong while SGCA is loosely associated with the other sarcoglycans. Interacts with DAG1. Post-translationally, disulfide bonds are present. Most strongly expressed in skeletal and heart muscle. Also detected in proliferating myoblasts.

The protein resides in the cell membrane. Its subcellular location is the sarcolemma. It is found in the cytoplasm. The protein localises to the cytoskeleton. In terms of biological role, component of the sarcoglycan complex, a subcomplex of the dystrophin-glycoprotein complex which forms a link between the F-actin cytoskeleton and the extracellular matrix. The sequence is that of Delta-sarcoglycan (Sgcd) from Mus musculus (Mouse).